The chain runs to 116 residues: Dynein light chain Tctex-type 3 (116 aa).

Position 4 is a 3'-nitrotyrosine (Y4).

Belongs to the dynein light chain Tctex-type family. In terms of assembly, homodimer. The cytoplasmic dynein 1 complex consists of two catalytic heavy chains (HCs) and a number of non-catalytic subunits presented by intermediate chains (ICs), light intermediate chains (LICs) and light chains (LCs); the composition seems to vary in respect to the IC, LIC and LC composition. The heavy chain homodimer serves as a scaffold for the probable homodimeric assembly of the respective non-catalytic subunits. The ICs and LICs bind directly to the HC dimer and the LCs assemble on the IC dimer. DYNLT1 and DYNLT3 compete for association with dynein IC (DYNC1I1 or DYNC1I2). Self-associates. Interacts with DYNC1I1 and DYNC1I2. Interacts with BUB3. Interacts with SATB1 in nucleus to form complex with matrix attachment regions (MARs) of DNA.

The protein resides in the nucleus. It is found in the cytoplasm. Its subcellular location is the cytoskeleton. The protein localises to the chromosome. It localises to the centromere. The protein resides in the kinetochore. In terms of biological role, acts as one of several non-catalytic accessory components of the cytoplasmic dynein 1 complex that are thought to be involved in linking dynein to cargos and to adapter proteins that regulate dynein function. Cytoplasmic dynein 1 acts as a motor for the intracellular retrograde motility of vesicles and organelles along microtubules. Probably binds BUB3 as part of transport cargo. Required for the efficient progression through mitosis. The protein is Dynein light chain Tctex-type 3 (DYNLT3) of Canis lupus familiaris (Dog).